The chain runs to 250 residues: Flagellar L-ring protein (250 aa).

The N-terminal stretch at M1–G32 is a signal peptide. C33 is lipidated: N-palmitoyl cysteine. Residue C33 is the site of S-diacylglycerol cysteine attachment.

It belongs to the FlgH family. In terms of assembly, the basal body constitutes a major portion of the flagellar organelle and consists of four rings (L,P,S, and M) mounted on a central rod.

Its subcellular location is the cell outer membrane. The protein resides in the bacterial flagellum basal body. In terms of biological role, assembles around the rod to form the L-ring and probably protects the motor/basal body from shearing forces during rotation. The chain is Flagellar L-ring protein from Hydrogenovibrio crunogenus (strain DSM 25203 / XCL-2) (Thiomicrospira crunogena).